The chain runs to 245 residues: 5-oxoprolinase subunit A (245 aa).

It belongs to the LamB/PxpA family. As to quaternary structure, forms a complex composed of PxpA, PxpB and PxpC.

The catalysed reaction is 5-oxo-L-proline + ATP + 2 H2O = L-glutamate + ADP + phosphate + H(+). Functionally, catalyzes the cleavage of 5-oxoproline to form L-glutamate coupled to the hydrolysis of ATP to ADP and inorganic phosphate. In Yersinia pseudotuberculosis serotype O:1b (strain IP 31758), this protein is 5-oxoprolinase subunit A.